A 100-amino-acid polypeptide reads, in one-letter code: DNA-binding protein HU (100 aa).

This sequence belongs to the bacterial histone-like protein family.

Functionally, histone-like DNA-binding protein which is capable of wrapping DNA to stabilize it, and thus to prevent its denaturation under extreme environmental conditions. This is DNA-binding protein HU (hup) from Synechocystis sp. (strain ATCC 27184 / PCC 6803 / Kazusa).